A 100-amino-acid chain; its full sequence is Urease subunit gamma (100 aa).

It belongs to the urease gamma subunit family. As to quaternary structure, heterotrimer of UreA (gamma), UreB (beta) and UreC (alpha) subunits. Three heterotrimers associate to form the active enzyme.

Its subcellular location is the cytoplasm. It catalyses the reaction urea + 2 H2O + H(+) = hydrogencarbonate + 2 NH4(+). The protein operates within nitrogen metabolism; urea degradation; CO(2) and NH(3) from urea (urease route): step 1/1. The chain is Urease subunit gamma from Pseudomonas aeruginosa (strain UCBPP-PA14).